A 339-amino-acid chain; its full sequence is Glycerol-3-phosphate dehydrogenase [NAD(P)+] (339 aa).

4 residues coordinate NADPH: Ser-15, Tyr-16, His-36, and Lys-110. Lys-110, Gly-139, and Thr-141 together coordinate sn-glycerol 3-phosphate. Ala-143 contacts NADPH. Sn-glycerol 3-phosphate is bound by residues Lys-195, Asp-248, Ser-258, Arg-259, and Asn-260. The Proton acceptor role is filled by Lys-195. NADPH is bound at residue Arg-259. 2 residues coordinate NADPH: Val-283 and Glu-285.

This sequence belongs to the NAD-dependent glycerol-3-phosphate dehydrogenase family.

The protein resides in the cytoplasm. The enzyme catalyses sn-glycerol 3-phosphate + NAD(+) = dihydroxyacetone phosphate + NADH + H(+). It catalyses the reaction sn-glycerol 3-phosphate + NADP(+) = dihydroxyacetone phosphate + NADPH + H(+). The protein operates within membrane lipid metabolism; glycerophospholipid metabolism. In terms of biological role, catalyzes the reduction of the glycolytic intermediate dihydroxyacetone phosphate (DHAP) to sn-glycerol 3-phosphate (G3P), the key precursor for phospholipid synthesis. The chain is Glycerol-3-phosphate dehydrogenase [NAD(P)+] from Yersinia pseudotuberculosis serotype O:1b (strain IP 31758).